A 538-amino-acid chain; its full sequence is Phosphoenolpyruvate carboxykinase (ATP) (538 aa).

Residues Arg64, Tyr205, and Lys211 each contribute to the substrate site. ATP contacts are provided by residues Lys211, His230, and 246–254; that span reads GLSGTGKTT. Positions 211 and 230 each coordinate Mn(2+). Asp267 contacts Mn(2+). ATP contacts are provided by residues Glu295, Arg331, 447–448, and Thr453; that span reads RI. Residue Arg331 coordinates substrate.

This sequence belongs to the phosphoenolpyruvate carboxykinase (ATP) family. In terms of assembly, monomer. Mn(2+) is required as a cofactor.

It localises to the cytoplasm. It catalyses the reaction oxaloacetate + ATP = phosphoenolpyruvate + ADP + CO2. It participates in carbohydrate biosynthesis; gluconeogenesis. Involved in the gluconeogenesis. Catalyzes the conversion of oxaloacetate (OAA) to phosphoenolpyruvate (PEP) through direct phosphoryl transfer between the nucleoside triphosphate and OAA. This chain is Phosphoenolpyruvate carboxykinase (ATP), found in Haemophilus influenzae (strain PittGG).